Here is a 443-residue protein sequence, read N- to C-terminus: ATP-dependent protease ATPase subunit HslU (443 aa).

Residues I18 and 60-65 (GVGKTE) each bind ATP. Positions 139–158 (AKNNWGQNETPAEPSSARQS) are disordered. Residues D256, E321, and R393 each contribute to the ATP site.

The protein belongs to the ClpX chaperone family. HslU subfamily. In terms of assembly, a double ring-shaped homohexamer of HslV is capped on each side by a ring-shaped HslU homohexamer. The assembly of the HslU/HslV complex is dependent on binding of ATP.

It is found in the cytoplasm. ATPase subunit of a proteasome-like degradation complex; this subunit has chaperone activity. The binding of ATP and its subsequent hydrolysis by HslU are essential for unfolding of protein substrates subsequently hydrolyzed by HslV. HslU recognizes the N-terminal part of its protein substrates and unfolds these before they are guided to HslV for hydrolysis. This is ATP-dependent protease ATPase subunit HslU from Erwinia tasmaniensis (strain DSM 17950 / CFBP 7177 / CIP 109463 / NCPPB 4357 / Et1/99).